The primary structure comprises 216 residues: Large ribosomal subunit protein uL24m (216 aa).

A mitochondrion-targeting transit peptide spans M1 to M9. Residues Y56–D89 enclose the KOW domain.

The protein belongs to the universal ribosomal protein uL24 family. Component of the mitochondrial ribosome large subunit (39S) which comprises a 16S rRNA and about 50 distinct proteins. In terms of tissue distribution, ubiquitous. Expressed at greater levels in the kidney, adipose tissue, muscle and liver than the brain, heart, ovary and lung.

The protein resides in the mitochondrion. In Xenopus laevis (African clawed frog), this protein is Large ribosomal subunit protein uL24m (mrpl24).